The following is a 545-amino-acid chain: Arginine-containing cyclodipeptide synthase ateA (545 aa).

The span at 390 to 425 (GNQQTPTQSADMDSTVSHRQQQPASSRSYTSKQNQM) shows a compositional bias: polar residues. The interval 390–433 (GNQQTPTQSADMDSTVSHRQQQPASSRSYTSKQNQMPRPLVISV) is disordered. A Conserved DDXXE motif motif is present at residues 434-438 (DDPSE).

Belongs to the arginine-containing cyclodipeptide synthase family.

It catalyses the reaction L-glutamyl-tRNA(Glu) + L-arginyl-tRNA(Arg) = cyclo(L-arginyl-L-glutamyl) + tRNA(Glu) + tRNA(Arg) + 2 H(+). The protein operates within secondary metabolite biosynthesis. Arginine-containing cyclodipeptide synthase; part of the cluster that mediates the biosynthesis of a highly modified cyclo-arginine-glutamate dipeptide (cRE). Within the pathway, ateA acts as the scaffold-generating enzyme and is responsible for formation of the cyclo-Arg-Glu diketopiperazine (cRW) from L-arginyl-tRNA(Arg) + L-glutamyl-tRNA(Glu). Additional enzymes from the cluster then further modify the cyclo-Arg-Glu diketopiperazine (cRW) scaffold. In Aspergillus terreus, this protein is Arginine-containing cyclodipeptide synthase ateA.